The primary structure comprises 578 residues: Arginine--tRNA ligase (578 aa).

The short motif at proline 123–histidine 133 is the 'HIGH' region element.

It belongs to the class-I aminoacyl-tRNA synthetase family. As to quaternary structure, monomer.

The protein resides in the cytoplasm. It catalyses the reaction tRNA(Arg) + L-arginine + ATP = L-arginyl-tRNA(Arg) + AMP + diphosphate. This chain is Arginine--tRNA ligase, found in Baumannia cicadellinicola subsp. Homalodisca coagulata.